Consider the following 238-residue polypeptide: Ribosomal RNA small subunit methyltransferase G (238 aa).

S-adenosyl-L-methionine contacts are provided by residues Gly77, Phe82, 128–129 (AE), and Arg147.

It belongs to the methyltransferase superfamily. RNA methyltransferase RsmG family.

The protein localises to the cytoplasm. Its function is as follows. Specifically methylates the N7 position of guanine in position 535 of 16S rRNA. This chain is Ribosomal RNA small subunit methyltransferase G, found in Brevibacillus brevis (strain 47 / JCM 6285 / NBRC 100599).